The chain runs to 507 residues: MEKSISSISKASMNSDEKLDKKEWDQQLPIDFGEGEDVTTEVYILDHKAERRLCRKFDFRILPLLALLYLFNALDKSNVSNAKTNGMDKDLGFVGDQYNIMISIFYIPFVLCAFPFSYLYKRFGAARILPFFMLSFGAMSLCQAAVKNFGGMMAVRWFLGMAESAVLPGVVYYLTTFYRRTELARRLAIFYAAANVSSAFGGLLAYGVFHIKGGKLQGWQYLFLIEGGVTFLCAIVIFLVLPVSVETANFLTDEEKTLAKMRIENDSSSAISEKLSFKQSLTVFKHPIAILWLLEEMALGVPLNSINNWLPQIVAAMGFSSVNTNLMTVAPAISGAIWLLVFAFISDFLKNRGIVLIAAISTTMIGFIVYGSIDIMNHIGVSYFACFLMTAGAAASSVLTSTWYNNNTPNESRRAVFTSVGVPLANVMGLVSANIFRPQDAPKYVPALGITAGFGGLGILLVASISVYMFFDNRRRDNAQGVKKTFADVSTKDLGEGPANPNFRWFL.

Residues 1-12 (MEKSISSISKAS) show a composition bias toward low complexity. Residues 1–20 (MEKSISSISKASMNSDEKLD) are disordered. 12 consecutive transmembrane segments (helical) span residues 57 to 74 (FDFRILPLLALLYLFNAL), 100 to 120 (IMISIFYIPFVLCAFPFSYLY), 126 to 146 (ARILPFFMLSFGAMSLCQAAV), 157 to 177 (WFLGMAESAVLPGVVYYLTTF), 189 to 209 (IFYAAANVSSAFGGLLAYGVF), 221 to 241 (YLFLIEGGVTFLCAIVIFLVL), 283 to 303 (VFKHPIAILWLLEEMALGVPL), 326 to 346 (LMTVAPAISGAIWLLVFAFIS), 353 to 373 (GIVLIAAISTTMIGFIVYGSI), 379 to 399 (IGVSYFACFLMTAGAAASSVL), 416 to 436 (VFTSVGVPLANVMGLVSANIF), and 445 to 465 (VPALGITAGFGGLGILLVASI).

It belongs to the major facilitator superfamily. Allantoate permease family.

The protein resides in the endoplasmic reticulum. It localises to the membrane. This is an uncharacterized protein from Schizosaccharomyces pombe (strain 972 / ATCC 24843) (Fission yeast).